We begin with the raw amino-acid sequence, 281 residues long: Endochitinase B (281 aa).

An N-terminal signal peptide occupies residues 1-33 (MAMAKAGAPRVSAAQLVTLGLSLLCAVAGPAAA). Residues 34-68 (QNCGCQPNVCCSKFGYCGTTDEYCGDGCQSGPCRS) enclose the Chitin-binding type-1 domain. 4 disulfide bridges follow: Cys-36-Cys-44, Cys-38-Cys-50, Cys-43-Cys-57, and Cys-61-Cys-66. Positions 69 to 78 (GGGGSSGGGG) are hinge region (Gly-rich). A catalytic region spans residues 79 to 281 (ANVASVVTGS…GVDPGPNLTC (203 aa)). Cys-101 and Cys-150 are disulfide-bonded. Catalysis depends on Glu-145, which acts as the Proton donor. The N-linked (GlcNAc...) asparagine glycan is linked to Asn-156. Disulfide bonds link Cys-162-Cys-171 and Cys-249-Cys-281. An N-linked (GlcNAc...) asparagine glycan is attached at Asn-278.

The protein belongs to the glycosyl hydrolase 19 family. Chitinase class I subfamily.

The protein localises to the secreted. The enzyme catalyses Random endo-hydrolysis of N-acetyl-beta-D-glucosaminide (1-&gt;4)-beta-linkages in chitin and chitodextrins.. In terms of biological role, defense against chitin-containing fungal pathogens. Its action is countered by fungal polyglycine hydrolases, that cleaves within its hinge region (Gly-rich) to disrupt chitin-binding. This chain is Endochitinase B, found in Zea mays (Maize).